A 279-amino-acid polypeptide reads, in one-letter code: Ribosomal RNA small subunit methyltransferase A (279 aa).

Residues Asn-25, Leu-27, Gly-52, Glu-73, Asp-98, and Asn-120 each contribute to the S-adenosyl-L-methionine site.

This sequence belongs to the class I-like SAM-binding methyltransferase superfamily. rRNA adenine N(6)-methyltransferase family. RsmA subfamily.

Its subcellular location is the cytoplasm. The catalysed reaction is adenosine(1518)/adenosine(1519) in 16S rRNA + 4 S-adenosyl-L-methionine = N(6)-dimethyladenosine(1518)/N(6)-dimethyladenosine(1519) in 16S rRNA + 4 S-adenosyl-L-homocysteine + 4 H(+). Its function is as follows. Specifically dimethylates two adjacent adenosines (A1518 and A1519) in the loop of a conserved hairpin near the 3'-end of 16S rRNA in the 30S particle. May play a critical role in biogenesis of 30S subunits. This is Ribosomal RNA small subunit methyltransferase A from Magnetococcus marinus (strain ATCC BAA-1437 / JCM 17883 / MC-1).